We begin with the raw amino-acid sequence, 353 residues long: Photosystem II D2 protein (353 aa).

At Thr2 the chain carries N-acetylthreonine. Thr2 carries the phosphothreonine modification. Residues 41-61 traverse the membrane as a helical segment; the sequence is CAYFALGGWFTGTTFVTSWYT. Residue His118 coordinates chlorophyll a. The chain crosses the membrane as a helical span at residues 125 to 141; sequence GFMLRQFELARSVQLRP. 2 residues coordinate pheophytin a: Gln130 and Asn143. A helical transmembrane segment spans residues 153–166; the sequence is VFVSVFLIYPLGQS. His198 is a binding site for chlorophyll a. Residues 208 to 228 traverse the membrane as a helical segment; sequence AALLCAIHGATVENTLFEDGD. A plastoquinone is bound by residues His215 and Phe262. Fe cation is bound at residue His215. Position 269 (His269) interacts with Fe cation. A helical transmembrane segment spans residues 279-295; the sequence is GLWMSALGVVGLALNLR.

This sequence belongs to the reaction center PufL/M/PsbA/D family. In terms of assembly, PSII is composed of 1 copy each of membrane proteins PsbA, PsbB, PsbC, PsbD, PsbE, PsbF, PsbH, PsbI, PsbJ, PsbK, PsbL, PsbM, PsbT, PsbX, PsbY, PsbZ, Psb30/Ycf12, at least 3 peripheral proteins of the oxygen-evolving complex and a large number of cofactors. It forms dimeric complexes. The D1/D2 heterodimer binds P680, chlorophylls that are the primary electron donor of PSII, and subsequent electron acceptors. It shares a non-heme iron and each subunit binds pheophytin, quinone, additional chlorophylls, carotenoids and lipids. There is also a Cl(-1) ion associated with D1 and D2, which is required for oxygen evolution. The PSII complex binds additional chlorophylls, carotenoids and specific lipids. serves as cofactor.

It localises to the plastid. The protein localises to the chloroplast thylakoid membrane. It catalyses the reaction 2 a plastoquinone + 4 hnu + 2 H2O = 2 a plastoquinol + O2. Functionally, photosystem II (PSII) is a light-driven water:plastoquinone oxidoreductase that uses light energy to abstract electrons from H(2)O, generating O(2) and a proton gradient subsequently used for ATP formation. It consists of a core antenna complex that captures photons, and an electron transfer chain that converts photonic excitation into a charge separation. The D1/D2 (PsbA/PsbD) reaction center heterodimer binds P680, the primary electron donor of PSII as well as several subsequent electron acceptors. D2 is needed for assembly of a stable PSII complex. This is Photosystem II D2 protein from Nuphar advena (Common spatterdock).